Consider the following 516-residue polypeptide: Lysine--tRNA ligase (516 aa).

Residues Met-1 to Glu-23 form a disordered region. 2 residues coordinate Mg(2+): Glu-426 and Glu-433.

Belongs to the class-II aminoacyl-tRNA synthetase family. As to quaternary structure, homodimer. Mg(2+) is required as a cofactor.

The protein resides in the cytoplasm. The catalysed reaction is tRNA(Lys) + L-lysine + ATP = L-lysyl-tRNA(Lys) + AMP + diphosphate. In Cupriavidus pinatubonensis (strain JMP 134 / LMG 1197) (Cupriavidus necator (strain JMP 134)), this protein is Lysine--tRNA ligase.